Consider the following 367-residue polypeptide: tRNA-specific 2-thiouridylase MnmA (367 aa).

Residues 10–17 and M36 contribute to the ATP site; that span reads AMSGGVDS. Catalysis depends on C106, which acts as the Nucleophile. An intrachain disulfide couples C106 to C204. G130 is an ATP binding site. The tract at residues 154 to 156 is interaction with tRNA; that stretch reads KDQ. The active-site Cysteine persulfide intermediate is the C204. The interaction with tRNA stretch occupies residues 310-311; sequence RY.

It belongs to the MnmA/TRMU family.

The protein localises to the cytoplasm. The catalysed reaction is S-sulfanyl-L-cysteinyl-[protein] + uridine(34) in tRNA + AH2 + ATP = 2-thiouridine(34) in tRNA + L-cysteinyl-[protein] + A + AMP + diphosphate + H(+). Its function is as follows. Catalyzes the 2-thiolation of uridine at the wobble position (U34) of tRNA, leading to the formation of s(2)U34. The chain is tRNA-specific 2-thiouridylase MnmA from Desulforamulus reducens (strain ATCC BAA-1160 / DSM 100696 / MI-1) (Desulfotomaculum reducens).